A 119-amino-acid chain; its full sequence is MEFGLSWIFLAAILKGVQCEVQLVESGGGLVKPGGSLRLSCAASGFTFSNAWMSWVRQAPGKGLEWVGRIKSKTDGGTTDYAAPVKGRFTISRDDSKNTLYLQMNSLKTEDTAVYYCTT.

A signal peptide spans Met1–Cys19. Positions Glu20–Ser44 are framework-1. The Ig-like domain maps to Glu20–Thr119. An intrachain disulfide couples Cys41 to Cys117. Positions Gly45–Trp52 are complementarity-determining-1. Residues Met53–Arg69 are framework-2. Positions Ile70–Thr79 are complementarity-determining-2. The framework-3 stretch occupies residues Asp80–Cys117. A complementarity-determining-3 region spans residues Thr118–Thr119.

Immunoglobulins are composed of two identical heavy chains and two identical light chains; disulfide-linked.

Its subcellular location is the secreted. The protein resides in the cell membrane. Its function is as follows. V region of the variable domain of immunoglobulin heavy chains that participates in the antigen recognition. Immunoglobulins, also known as antibodies, are membrane-bound or secreted glycoproteins produced by B lymphocytes. In the recognition phase of humoral immunity, the membrane-bound immunoglobulins serve as receptors which, upon binding of a specific antigen, trigger the clonal expansion and differentiation of B lymphocytes into immunoglobulins-secreting plasma cells. Secreted immunoglobulins mediate the effector phase of humoral immunity, which results in the elimination of bound antigens. The antigen binding site is formed by the variable domain of one heavy chain, together with that of its associated light chain. Thus, each immunoglobulin has two antigen binding sites with remarkable affinity for a particular antigen. The variable domains are assembled by a process called V-(D)-J rearrangement and can then be subjected to somatic hypermutations which, after exposure to antigen and selection, allow affinity maturation for a particular antigen. The polypeptide is Immunoglobulin heavy variable 3-15 (Homo sapiens (Human)).